The primary structure comprises 370 residues: Protein FAM110B (370 aa).

Disordered stretches follow at residues 127-151 and 237-256; these read SSEG…RSEA and KSPE…RPSL. Phosphoserine is present on residues serine 238 and serine 301. Residues 317–337 are disordered; that stretch reads DCEQSQDSNSDLRNDDSANDR. Over residues 326-335 the composition is skewed to basic and acidic residues; sequence SDLRNDDSAN.

Belongs to the FAM110 family. In terms of tissue distribution, detected in thyroid, spleen and testis, and at lower levels in stomach, spinal cord, lymph node, trachea, adrenal gland, prostate, ovary and intestine.

It localises to the cytoplasm. The protein resides in the cytoskeleton. Its subcellular location is the microtubule organizing center. The protein localises to the centrosome. Functionally, may be involved in tumor progression. This Homo sapiens (Human) protein is Protein FAM110B (FAM110B).